The chain runs to 307 residues: Junctional adhesion molecule 2A (307 aa).

An N-terminal signal peptide occupies residues 1-18; the sequence is MLVCVSLLILIHSVPVSP. Residues 19–112 enclose the Ig-like V-type domain; it reads VTVSSRNPKV…EVSAPSDSIS (94 aa). The Extracellular portion of the chain corresponds to 19–226; the sequence is VTVSSRNPKV…FQTHDLNVAA (208 aa). 2 disulfides stabilise this stretch: Cys40-Cys102 and Cys147-Cys197. The 100-residue stretch at 126–225 folds into the Ig-like C2-type domain; it reads PQTPSCDVPS…TFQTHDLNVA (100 aa). The chain crosses the membrane as a helical span at residues 227–247; sequence VVSAVVLVCVILFLCAFGVCL. The Cytoplasmic portion of the chain corresponds to 248–307; it reads AHRQGYFSRHRGRSFWIPHCHGVTHISSQNLNPSEHTQHSGYSHPPKEPQDFKHTQSFML. Residues 278 to 288 show a composition bias toward polar residues; that stretch reads LNPSEHTQHSG. Residues 278–307 form a disordered region; the sequence is LNPSEHTQHSGYSHPPKEPQDFKHTQSFML. Residues 292 to 301 are compositionally biased toward basic and acidic residues; it reads PPKEPQDFKH.

The protein belongs to the immunoglobulin superfamily.

Its subcellular location is the cell membrane. It localises to the cell junction. The protein localises to the tight junction. Functionally, junctional adhesion protein that mediates heterotypic cell-cell interactions to regulate different cellular processes. During myogenesis, it is involved in myocyte fusion through the binding of jam3b on neighboring myocytes. The sequence is that of Junctional adhesion molecule 2A (jam2a) from Danio rerio (Zebrafish).